The sequence spans 150 residues: D-aminoacyl-tRNA deacylase (150 aa).

The short motif at 138–139 (GP) is the Gly-cisPro motif, important for rejection of L-amino acids element.

This sequence belongs to the DTD family. As to quaternary structure, homodimer.

It localises to the cytoplasm. The enzyme catalyses glycyl-tRNA(Ala) + H2O = tRNA(Ala) + glycine + H(+). It carries out the reaction a D-aminoacyl-tRNA + H2O = a tRNA + a D-alpha-amino acid + H(+). In terms of biological role, an aminoacyl-tRNA editing enzyme that deacylates mischarged D-aminoacyl-tRNAs. Also deacylates mischarged glycyl-tRNA(Ala), protecting cells against glycine mischarging by AlaRS. Acts via tRNA-based rather than protein-based catalysis; rejects L-amino acids rather than detecting D-amino acids in the active site. By recycling D-aminoacyl-tRNA to D-amino acids and free tRNA molecules, this enzyme counteracts the toxicity associated with the formation of D-aminoacyl-tRNA entities in vivo and helps enforce protein L-homochirality. The sequence is that of D-aminoacyl-tRNA deacylase from Bacteroides thetaiotaomicron (strain ATCC 29148 / DSM 2079 / JCM 5827 / CCUG 10774 / NCTC 10582 / VPI-5482 / E50).